We begin with the raw amino-acid sequence, 448 residues long: MRLSDLRGRKVAVWGTGREGRAAVVAIAAHGPADLVAVDDGGSTVSPPWDGFLATAAPLVTGDAGAQRLAAADVVVRSPGVPNTHPWLAELWRRQVPVTQGTALWMADHAARTVGVTGSKGKSTTSSLISHLLAAVDQPNVFGGNIGVPTLDLPAADLYVLELSSYQCSDLTDSPRVAVVTALFPEHLDAHGGEREYYRDKLNLLAHGPETVVVNGADPRLAAELGDRPVVRAGTPDTTHVAGGPDGTPWFHLGDQPLFPRAVLPLVGRHNEGNLCVALAVLDVLGVDVLARRDTLAVAVAGFQGLAHRLTEIVDPSGLTFVDDTLATSPYAAMHAIDAYDGRALTVIVGGADRGLDYTPLRDHLAEREITVIGVPDSGARIVAALDGLPKVRCDVTGDLVEAVRLARRVTPAGGVVLLSPAAPSYGQFRNFEHRSEVFAQAVRDTAG.

An ATP-binding site is contributed by Gly-118–Thr-124.

It belongs to the MurCDEF family. MurD2 subfamily.

Its subcellular location is the cytoplasm. It carries out the reaction UDP-N-acetyl-alpha-D-muramoyl-L-alanine + L-glutamate + ATP = UDP-N-acetyl-alpha-D-muramoyl-L-alanyl-L-glutamate + ADP + phosphate + H(+). It participates in cell wall biogenesis; peptidoglycan biosynthesis. Its function is as follows. Cell wall formation. Catalyzes the addition of L-glutamate to the nucleotide precursor UDP-N-acetylmuramoyl-L-alanine. In Salinispora tropica (strain ATCC BAA-916 / DSM 44818 / JCM 13857 / NBRC 105044 / CNB-440), this protein is UDP-N-acetylmuramoyl-L-alanine--L-glutamate ligase.